The chain runs to 319 residues: MITFLPIIFSILIVVIFVIGNFANGFIALVNSIEWVKRQKISFVDQILTALAVSRVGLLWVLLLHWYATQLNPAFYSVEVRITVYNVWAVTNHFSSWLATSLSMFYLLKIANFSNLIFLRIKRRVKSVVLVILLGPLLFLVCHLFVINMDETIWTKEYEGNMTWKIKLRSAMYHSNMTLTMLANFVPLTLTLISFLLLICSLCKHLKKMQLHGKGSQDPSTKVHIKALQTVTSFLLLCAIYFLSMIISVCNLGRLEKQPVFMFCQAIIFSYPSTHPFILILGNKKLKQIFLSVLWHVRYWVKDRSLRLHRFTRAALCKG.

A topological domain (extracellular) is located at residue methionine 1. Residues isoleucine 2–phenylalanine 22 form a helical membrane-spanning segment. Over alanine 23–glutamine 46 the chain is Cytoplasmic. Residues isoleucine 47–tyrosine 67 form a helical membrane-spanning segment. Topologically, residues alanine 68–asparagine 86 are extracellular. A helical membrane pass occupies residues valine 87–leucine 107. At leucine 108–lysine 126 the chain is on the cytoplasmic side. The chain crosses the membrane as a helical span at residues serine 127–isoleucine 147. The Extracellular portion of the chain corresponds to asparagine 148–threonine 178. N-linked (GlcNAc...) asparagine glycosylation is found at asparagine 161 and asparagine 176. The chain crosses the membrane as a helical span at residues leucine 179–isoleucine 199. At cysteine 200–glutamine 229 the chain is on the cytoplasmic side. Residues threonine 230–cysteine 250 traverse the membrane as a helical segment. Over asparagine 251–proline 259 the chain is Extracellular. A helical membrane pass occupies residues valine 260–isoleucine 280. The Cytoplasmic segment spans residues leucine 281–glycine 319.

It belongs to the G-protein coupled receptor T2R family.

The protein localises to the membrane. In terms of biological role, receptor that may play a role in the perception of bitterness and is gustducin-linked. May play a role in sensing the chemical composition of the gastrointestinal content. The activity of this receptor may stimulate alpha gustducin, mediate PLC-beta-2 activation and lead to the gating of TRPM5. The polypeptide is Taste receptor type 2 member 30 (TAS2R30) (Pan troglodytes (Chimpanzee)).